A 923-amino-acid polypeptide reads, in one-letter code: MLEDEYQIDFFSDNGFVRKQCPTCGNFFWTRDIERSTCGDAPCDPYSFIGNPVFKKELELPDMREFYLNFFEEQGHTRIERYPVIARWRDDIYLTIASIADFQPFVTSGQVPPPANPLTISQPCIRLSDLDAVGKSGRHLTTFEMMAHHAFNTKNEEIYWKEHTLELCDGLLNSLGADPMAVTYKEEPWAGGGNAGACVEVLIGGLEVATLVFMNLKKDKNGDIDIKGDMYSKMENYIVDTGYGLERLVWASKGSPTIYDAIFPSIVNELMGLAGIEHELENNEYSHILSQNARLAGLMDISEKANLLELRKQVAASIGITADKLSSIMEPVENVYAIADHTRCLTFMIGDGIIPSNVKAGYLARLVIRRTLRMMKDLGIMIPISEIIQMHINNLPEYPEFQKRFDVIKDILEHEERKFAETLERGRRMMEKSARHYKESGEKMPLETIIDMYDSHGIPPEISKAVASDVGVEVDLPDNFYSLVADKHSQSEEKEEKVVPFADKIARLPKTKRLFYDEPNRMDFDAVVLEVFDNHIVLDNTLMYPEGGGQPADHGTLTVEDVVLKVVDTQMYDGVVVHTINEIEDELHIRKGDMVVGRVNEKRRMAHARHHTATHIINDAAREVLGSHIWQTGAQKFADRARLDISHYKRITQEEANQIEIIANHTVMKNKRIISDWMDRTEAEQKYGFRLYQGGVPPGKMIRVLQVGNDIEACAGTHCTNTGLVGPIKILKTERIQDGVERLEYAAGEAAIIAMQDIETLVRDSSETLRVSAEQLPSTIERFFDEWKELKKENNKLKEELAHSRVSQLVNDAEDVNGIRIITKAIPHADSEELTKTAGELTQESNVVAILISEMDGVKIVATAGDDAVKRGVNVGAIVKEMSTMVGGGGGGRPNMARGGGTDPSGMDNALSRSVELLKEQLN.

Zn(2+)-binding residues include His-611, His-615, Cys-714, and His-718. Gly residues predominate over residues Val-886 to Asp-903. Residues Val-886–Asn-909 are disordered.

Belongs to the class-II aminoacyl-tRNA synthetase family. Zn(2+) serves as cofactor.

It is found in the cytoplasm. The enzyme catalyses tRNA(Ala) + L-alanine + ATP = L-alanyl-tRNA(Ala) + AMP + diphosphate. Catalyzes the attachment of alanine to tRNA(Ala) in a two-step reaction: alanine is first activated by ATP to form Ala-AMP and then transferred to the acceptor end of tRNA(Ala). Also edits incorrectly charged Ser-tRNA(Ala) and Gly-tRNA(Ala) via its editing domain. The protein is Alanine--tRNA ligase of Methanococcoides burtonii (strain DSM 6242 / NBRC 107633 / OCM 468 / ACE-M).